A 142-amino-acid chain; its full sequence is MIRHGSNKLKIFILSILLLTLSGCALKSSSNSEKEWHIVPVSKDYFSIPNDLLWSFNTTNKSINVYSKCISGKAVYSFNAGKFMGNFNVKEVDGCFMDAQKIAIDKLFSMLKDGVVLKGNKINDTILIEKDGEVKLKLIRGI.

Residues 1-23 (MIRHGSNKLKIFILSILLLTLSG) form the signal peptide. Cys24 carries the N-palmitoyl cysteine lipid modification. The S-diacylglycerol cysteine moiety is linked to residue Cys24.

This sequence belongs to the MxiM family. Monomer. Interacts with the secretin MxiD/SctC.

The protein resides in the cell outer membrane. Involved in the synthesis of the type III secretion system (T3SS), also called injectisome, which is used to inject bacterial effector proteins into eukaryotic host cells. Pilot protein that is required for the proper localization of the secretin MxiD/SctC in the outer membrane. Also influences both MxiD/SctC multimerization and stability. Required for both Ipa translocation and tissue culture cell invasion. Binds lipids. The chain is Type 3 secretion system pilotin from Shigella flexneri.